Here is a 31-residue protein sequence, read N- to C-terminus: M-poneritoxin-Nc3b (31 aa).

It belongs to the ponericin-G family. In terms of tissue distribution, expressed by the venom gland.

The protein resides in the secreted. It localises to the target cell membrane. Membrane-perturbating peptide with a few moderate activities. It is insecticidal, since it induces reversible paralysis in insects (L.cuprina) after 1 hour, but fails to kill them. It is also antiparasitic, since it moderately inhibits the larval development of the major pathogenic nematode of ruminants (H.contortus, IC(50)=23.2 uM) and reduces the motility of adult males of the other nematode B.malayi. It does not show antibacterial activity (MIC&gt;40 uM). It is not cytotoxic to HEK293 cells and does not induce hemolysis in human erythrocytes. It does not cause an increase in intracellular calcium concentration on neuronal and epithelial cell lines. This is M-poneritoxin-Nc3b from Neoponera commutata (Large hunting ant).